We begin with the raw amino-acid sequence, 213 residues long: FMN-dependent NADH:quinone oxidoreductase (213 aa).

This sequence belongs to the azoreductase type 1 family. In terms of assembly, homodimer. It depends on FMN as a cofactor.

The enzyme catalyses 2 a quinone + NADH + H(+) = 2 a 1,4-benzosemiquinone + NAD(+). The catalysed reaction is N,N-dimethyl-1,4-phenylenediamine + anthranilate + 2 NAD(+) = 2-(4-dimethylaminophenyl)diazenylbenzoate + 2 NADH + 2 H(+). Its function is as follows. Quinone reductase that provides resistance to thiol-specific stress caused by electrophilic quinones. Also exhibits azoreductase activity. Catalyzes the reductive cleavage of the azo bond in aromatic azo compounds to the corresponding amines. The polypeptide is FMN-dependent NADH:quinone oxidoreductase (Streptococcus agalactiae serotype III (strain NEM316)).